A 909-amino-acid polypeptide reads, in one-letter code: Protein virilizer (909 aa).

The span at Ser746–Glu784 shows a compositional bias: polar residues. Residues Ser746–Leu824 form a disordered region. The segment covering Ser785 to Ser799 has biased composition (low complexity). Over residues Met800–Phe810 the composition is skewed to polar residues. Low complexity predominate over residues Asn811 to Leu824. Phosphoserine is present on residues Ser856 and Ser898.

The protein belongs to the vir family. As to quaternary structure, component of the MIS (mRNA N6-methyladenosine (m6A) methylation) complex, at least composed of IME4, KAR4, MUM2, SLZ1, and VIR1. Interacts with KAR4. Interacts with SLZ1. Interacts with MUM2. Interacts with IME4.

It localises to the cytoplasm. The protein resides in the nucleus. Its subcellular location is the nucleolus. Its function is as follows. Component of the MIS complex, a complex that mediates N6-methyladenosine (m6A) methylation of meiotic mRNAs and is required for initiation of meiosis, progression through the meiotic divisions and sporulation. In the complex, performs a scaffolding role stabilizing the other complex members. The protein is Protein virilizer of Saccharomyces cerevisiae (strain ATCC 204508 / S288c) (Baker's yeast).